The primary structure comprises 941 residues: Putative helicase 121R (941 aa).

Residues 285–323 adopt a coiled-coil conformation; the sequence is LKQELKDIEGENSETIKRNLKDAKDLLKILNKKRANEYN. The segment at 492–514 is disordered; sequence DDSGRDSEEDSQEEEVSSSQEQL. Residues 498 to 507 are compositionally biased toward acidic residues; that stretch reads SEEDSQEEEV. Positions 609–791 constitute an SF3 helicase domain; the sequence is EEVLELYNFL…FVAREKCPET (183 aa). Position 653 to 660 (653 to 660) interacts with ATP; the sequence is GNGNNGKS.

The protein belongs to the IIV-6 184L family.

The polypeptide is Putative helicase 121R (Invertebrate iridescent virus 3 (IIV-3)).